Here is a 297-residue protein sequence, read N- to C-terminus: uncharacterized protein (297 aa).

Disordered regions lie at residues 12–43 (QNNN…TNDN), 65–85 (VPNS…DKPI), 122–151 (KVST…TNET), and 265–297 (SRLS…DQNN). A compositionally biased stretch (polar residues) spans 65 to 79 (VPNSINVNTSSSGNK). A compositionally biased stretch (low complexity) spans 122 to 135 (KVSTTTTTTSSTSK). The segment covering 140–151 (QTITKPNKTNET) has biased composition (polar residues). Positions 268–287 (SSNNNNNNNNNNNNNNNNSN) are enriched in low complexity.

This is an uncharacterized protein from Dictyostelium discoideum (Social amoeba).